The primary structure comprises 144 residues: Flagellar assembly factor FliW (144 aa).

This sequence belongs to the FliW family. As to quaternary structure, monomer. One copy interacts with the each alpha-helical wing of the CsrA homodimer, yielding a FliW-CsrA(2)-FliW complex. Comparison with a CsrA-mRNA structure (2JPP) suggests CsrA cannot bind both mRNA and FliW at the same time. Interacts with flagellin.

The protein resides in the cytoplasm. In terms of biological role, acts as an anti-CsrA protein, binds CsrA and prevents it from repressing translation of its target genes, one of which is flagellin. Binds to flagellin and participates in the assembly of the flagellum. Its function is as follows. Allosterically inhibits CsrA binding to mRNA in a non-competitive fashion by preventing CsrA binding to the 5'-UTR. The polypeptide is Flagellar assembly factor FliW (Geobacillus thermodenitrificans (strain NG80-2)).